We begin with the raw amino-acid sequence, 795 residues long: Phospholipase A-2-activating protein (795 aa).

WD repeat units follow at residues 17–56, 63–107, 110–148, 149–188, 190–227, 229–268, and 270–307; these read HELD…RSFT, GHSN…PLYI, GHKN…MTLQ, GHTA…RTFS, HEDC…LEVY, GHTN…QTIR, and PAQS…TASA. Position 50 is a phosphoserine (serine 50). Residues 366-465 enclose the PFU domain; sequence QWSVSEGRWI…KGQMLGLGNP (100 aa). At lysine 529 the chain carries N6-acetyllysine. The PUL domain maps to 533 to 794; sequence IYFPKKEAVT…SECCRFILNL (262 aa). ARM repeat units lie at residues 546-588, 589-620, 621-669, 670-715, 716-755, and 756-795; these read ANPT…NSSS, EKPT…LRLS, IKHP…CFVG, QAGQ…CFHK, DHNI…LISD, and DSNA…LNLL.

The protein belongs to the WD repeat PLAP family. In terms of assembly, interacts with ubiquitin. Interacts with UBXN6, VCP and YOD1; may form a complex involved in macroautophagy.

The protein localises to the nucleus. It localises to the cytoplasm. It is found in the synapse. Functionally, plays a role in protein ubiquitination, sorting and degradation through its association with VCP. Involved in ubiquitin-mediated membrane proteins trafficking to late endosomes in an ESCRT-dependent manner, and hence plays a role in synaptic vesicle recycling. May play a role in macroautophagy, regulating for instance the clearance of damaged lysosomes. Plays a role in cerebellar Purkinje cell development. Positively regulates cytosolic and calcium-independent phospholipase A2 activities in a tumor necrosis factor alpha (TNF-alpha)- or lipopolysaccharide (LPS)-dependent manner, and hence prostaglandin E2 biosynthesis. The chain is Phospholipase A-2-activating protein (PLAA) from Homo sapiens (Human).